A 391-amino-acid polypeptide reads, in one-letter code: Sulfate adenylyltransferase (391 aa).

It belongs to the sulfate adenylyltransferase family.

It catalyses the reaction sulfate + ATP + H(+) = adenosine 5'-phosphosulfate + diphosphate. It participates in sulfur metabolism; hydrogen sulfide biosynthesis; sulfite from sulfate: step 1/3. This Lactiplantibacillus plantarum (strain ATCC BAA-793 / NCIMB 8826 / WCFS1) (Lactobacillus plantarum) protein is Sulfate adenylyltransferase.